The sequence spans 757 residues: Maltose phosphorylase (757 aa).

A substrate-binding site is contributed by 354-355; the sequence is WD. Glu483 acts as the Proton donor in catalysis. 588–589 contributes to the substrate binding site; the sequence is KQ.

Belongs to the glycosyl hydrolase 65 family.

It carries out the reaction D-maltose + phosphate = beta-D-glucose 1-phosphate + D-glucose. It participates in glycan degradation; maltose degradation. Functionally, catalyzes the phosphorolysis of maltose, leading to the formation of glucose and glucose 1-P. The chain is Maltose phosphorylase (mdxK) from Bacillus subtilis (strain 168).